The chain runs to 275 residues: Elongation factor Ts (275 aa).

Residues threonine 80–valine 83 form an involved in Mg(2+) ion dislocation from EF-Tu region.

Belongs to the EF-Ts family.

It localises to the cytoplasm. Functionally, associates with the EF-Tu.GDP complex and induces the exchange of GDP to GTP. It remains bound to the aminoacyl-tRNA.EF-Tu.GTP complex up to the GTP hydrolysis stage on the ribosome. This chain is Elongation factor Ts, found in Kineococcus radiotolerans (strain ATCC BAA-149 / DSM 14245 / SRS30216).